Here is a 481-residue protein sequence, read N- to C-terminus: CUGBP Elav-like family member 6 (481 aa).

Residues 1–12 show a composition bias toward low complexity; sequence MAAAPGGSAQPA. The interval 1–34 is disordered; sequence MAAAPGGSAQPAGPGPRLGFSTADSGVGMSGLNP. 3 RRM domains span residues 46–127, 134–214, and 396–474; these read IKLF…PAAS, RKLF…LADT, and CNLF…LKRP.

Belongs to the CELF/BRUNOL family. Expressed mainly in kidney, brain and testis and present in other tissues albeit at lower levels. Also expressed in fetal kidney.

Its subcellular location is the nucleus. The protein resides in the cytoplasm. RNA-binding protein implicated in the regulation of pre-mRNA alternative splicing. Mediates exon inclusion and/or exclusion in pre-mRNA that are subject to tissue-specific and developmentally regulated alternative splicing. Specifically activates exon 5 inclusion of TNNT2 in a muscle-specific splicing enhancer (MSE)-dependent manner. Promotes also exon exclusion of INSR pre-mRNA. The protein is CUGBP Elav-like family member 6 (CELF6) of Homo sapiens (Human).